The sequence spans 476 residues: Adenosylhomocysteinase (476 aa).

The substrate site is built by Thr67, Asp142, and Glu202. 203–205 (TTT) contacts NAD(+). Positions 232 and 236 each coordinate substrate. NAD(+) is bound by residues Asn237, 266 to 271 (GYGDVG), Glu289, Asn324, 345 to 347 (IGH), and Asn390.

The protein belongs to the adenosylhomocysteinase family. Requires NAD(+) as cofactor.

The protein resides in the cytoplasm. It carries out the reaction S-adenosyl-L-homocysteine + H2O = L-homocysteine + adenosine. Its pathway is amino-acid biosynthesis; L-homocysteine biosynthesis; L-homocysteine from S-adenosyl-L-homocysteine: step 1/1. May play a key role in the regulation of the intracellular concentration of adenosylhomocysteine. The polypeptide is Adenosylhomocysteinase (Synechococcus sp. (strain WH7803)).